Here is a 141-residue protein sequence, read N- to C-terminus: UPF0102 protein BRADO0179 (141 aa).

The disordered stretch occupies residues 1-24; that stretch reads MAETDRATDKPAGAPKPAKTASPE. The segment covering 10–19 has biased composition (low complexity); it reads KPAGAPKPAK.

The protein belongs to the UPF0102 family.

The sequence is that of UPF0102 protein BRADO0179 from Bradyrhizobium sp. (strain ORS 278).